The primary structure comprises 39 residues: Photosystem II reaction center protein J (39 aa).

A helical transmembrane segment spans residues 7 to 27 (IPLWLVGLVGGLAVITMLSLF).

This sequence belongs to the PsbJ family. As to quaternary structure, PSII is composed of 1 copy each of membrane proteins PsbA, PsbB, PsbC, PsbD, PsbE, PsbF, PsbH, PsbI, PsbJ, PsbK, PsbL, PsbM, PsbT, PsbX, PsbY, PsbZ, Psb30/Ycf12, at least 3 peripheral proteins of the oxygen-evolving complex and a large number of cofactors. It forms dimeric complexes.

It localises to the plastid. It is found in the chloroplast thylakoid membrane. In terms of biological role, one of the components of the core complex of photosystem II (PSII). PSII is a light-driven water:plastoquinone oxidoreductase that uses light energy to abstract electrons from H(2)O, generating O(2) and a proton gradient subsequently used for ATP formation. It consists of a core antenna complex that captures photons, and an electron transfer chain that converts photonic excitation into a charge separation. This Trieres chinensis (Marine centric diatom) protein is Photosystem II reaction center protein J.